A 148-amino-acid polypeptide reads, in one-letter code: uncharacterized protein (148 aa).

The segment at Q38–K99 is disordered. A compositionally biased stretch (basic and acidic residues) spans F64–R82. Residues R83–K99 are compositionally biased toward basic residues.

This is an uncharacterized protein from Fowl adenovirus A serotype 1 (strain CELO / Phelps) (FAdV-1).